Consider the following 470-residue polypeptide: Glutamate--tRNA ligase (470 aa).

Residues 9–19 (PSPTGFLHVGG) carry the 'HIGH' region motif. Residues 236–240 (RLSKR) carry the 'KMSKS' region motif. Lys-239 is a binding site for ATP.

It belongs to the class-I aminoacyl-tRNA synthetase family. Glutamate--tRNA ligase type 1 subfamily. In terms of assembly, monomer.

The protein resides in the cytoplasm. It catalyses the reaction tRNA(Glu) + L-glutamate + ATP = L-glutamyl-tRNA(Glu) + AMP + diphosphate. Its function is as follows. Catalyzes the attachment of glutamate to tRNA(Glu) in a two-step reaction: glutamate is first activated by ATP to form Glu-AMP and then transferred to the acceptor end of tRNA(Glu). The chain is Glutamate--tRNA ligase from Legionella pneumophila (strain Lens).